A 540-amino-acid chain; its full sequence is Receptor-interacting serine/threonine-protein kinase 2 (540 aa).

One can recognise a Protein kinase domain in the interval 18–294 (LADLRYLSRG…KCLIELEPVL (277 aa)). ATP is bound by residues 24-32 (LSRGASGTV) and Lys47. Residues 65 to 73 (REAEILHKA) are helix alphaC. Asp146 acts as the Proton acceptor in catalysis. The tract at residues 167-193 (LSKWRMMSLSQSRSSKSAPEGGTIVYM) is activation segment (AS). Phosphoserine is present on Ser168. Residue Ser174 is modified to Phosphoserine; alternate. Phosphoserine; by autocatalysis is present on Ser176. Position 178 is a phosphoserine; alternate (Ser178). The residue at position 180 (Ser180) is a Phosphoserine. Ser181 bears the Phosphoserine; alternate mark. Residue Lys209 forms a Glycyl lysine isopeptide (Lys-Gly) (interchain with G-Cter in ubiquitin) linkage. The segment at 318–367 (SRTVHLSDKKKRELSPNIPVNSGPREESCGSSQLHKTSGSPGTSRSLSAP) is disordered. A compositionally biased stretch (basic and acidic residues) spans 322–331 (HLSDKKKREL). Positions 346-366 (CGSSQLHKTSGSPGTSRSLSA) are enriched in polar residues. 2 positions are modified to phosphoserine: Ser363 and Ser391. The 93-residue stretch at 432-524 (GIAQQWIQSK…LQPYPEILVL (93 aa)) folds into the CARD domain. At Tyr472 the chain carries Phosphotyrosine; by autocatalysis. 3 positions are modified to phosphoserine: Ser525, Ser527, and Ser529. Lys536 is covalently cross-linked (Glycyl lysine isopeptide (Lys-Gly) (interchain with G-Cter in ubiquitin)). Ser537 is modified (phosphoserine).

This sequence belongs to the protein kinase superfamily. TKL Ser/Thr protein kinase family. In terms of assembly, interacts (via CARD domain) with NOD2 (via CARD domain). Interacts (via CARD domain) with NOD1 (via CARD domain). Homooligomer; following interaction with NOD1 or NOD2, homooligomerizes via its CARD domain and forms long filaments named RIPosomes. Found in a signaling complex consisting of at least ARHGEF2, NOD2 and RIPK2. Interacts with ARHGEF2; the interaction mediates tyrosine phosphorylation of RIPK2 by Src kinase CSK. Interacts with MAP3K4; this interaction sequesters RIPK2 from the NOD2 signaling pathway. Interacts with IKBKG/NEMO. The polyubiquitinated protein interacts with MAP3K7/TAK1; interaction is indirect and is mediated by TAB2 and TAB3 that bind to polyubiquitin chains attached to RIPK2. Binds to CFLAR/CLARP and CASP1 via their CARD domains. Binds to BIRC3/c-IAP1 and BIRC2/c-IAP2, TRAF1, TRAF2, TRAF5 and TRAF6. Interacts with NLRP10. Interacts with CARD9. Interacts with INAVA; the interaction takes place upon PRR stimulation. Interacts (via CARD domain) with NGFR (via death domain). Interacts with IRGM; promoting RIPK2 degradation. Polyubiquitinated via both 'Lys-63'- and 'Met-1'-linked polyubiquitin following recruitment by NOD1 or NOD2, creating docking sites for downstream effectors, triggering activation of the NF-kappa-B and MAP kinases signaling. 'Lys-63'-linked polyubiquitination by XIAP is essential for NOD2 signaling and promotes recruitment of the LUBAC complex. Also polyubiquitinated with 'Lys-63'-linked chains by PELI3, BIRC2/c-IAP1 and BIRC3/c-IAP2. Ubiquitinated on Lys-209 via 'Lys-63'-linked by ITCH. Undergoes 'Lys-63'-linked deubiquitination by MYSM1 to attenuate NOD2-mediated inflammation and tissue damage. Polyubiquitinated with 'Lys-63'-linked chains in response to Shigella infection, promoting its SQSTM1/p62-dependent autophagic degradation. Undergoes 'Met-1'-linked polyubiquitination; the head-to-tail linear polyubiquitination is mediated by the LUBAC complex in response to NOD2 stimulation 'Met-1'-linked polyubiquitination. 'Lys-63'-linked polyubiquitination by XIAP is required for recruimtent of the LUBAC complex and subsequent. Linear polyubiquitination is restricted by FAM105B/otulin, probably to limit NOD2-dependent pro-inflammatory signaling activation of NF-kappa-B. Post-translationally, autophosphorylated. Phosphorylated at Ser-176, either via autophosphorylation or by LRRK2, enhancing activity. Autophosphorylation at Tyr-472 is required for effective NOD2 signaling. Autophosphorylation is however not essential for NOD2 signaling. In terms of processing, degraded via selective autophagy following interaction with IRGM. IRGM promotes NOD1/NOD2-RIPK2 RIPosome recruitment to autophagosome membranes. RIPK2 biquitinated via 'Lys-63'-linked chains is then recognized by SQSTM1/p62, leading to the SQSTM1/p62-dependent autophagic degradation of the NOD1/NOD2-RIPK2 RIPosome.

The protein resides in the cytoplasm. The protein localises to the cell membrane. Its subcellular location is the endoplasmic reticulum. The catalysed reaction is L-seryl-[protein] + ATP = O-phospho-L-seryl-[protein] + ADP + H(+). The enzyme catalyses L-threonyl-[protein] + ATP = O-phospho-L-threonyl-[protein] + ADP + H(+). It catalyses the reaction L-tyrosyl-[protein] + ATP = O-phospho-L-tyrosyl-[protein] + ADP + H(+). Its activity is regulated as follows. In the inactive state, the helix alphaC is packed against the helical, non-phosphorylated activation segment (AS). Upon activation, helix alphaC is displaced and the phosphorylated AS becomes disordered. In terms of biological role, serine/threonine/tyrosine-protein kinase that plays an essential role in modulation of innate and adaptive immune responses. Acts as a key effector of NOD1 and NOD2 signaling pathways: upon activation by bacterial peptidoglycans, NOD1 and NOD2 oligomerize and recruit RIPK2 via CARD-CARD domains, leading to the formation of RIPK2 filaments. Once recruited, RIPK2 autophosphorylates and undergoes 'Lys-63'-linked polyubiquitination by E3 ubiquitin ligases XIAP, BIRC2 and BIRC3, as well as 'Met-1'-linked (linear) polyubiquitination by the LUBAC complex, becoming a scaffolding protein for downstream effectors. 'Met-1'-linked polyubiquitin chains attached to RIPK2 recruit IKBKG/NEMO, which undergoes 'Lys-63'-linked polyubiquitination in a RIPK2-dependent process. 'Lys-63'-linked polyubiquitin chains attached to RIPK2 serve as docking sites for TAB2 and TAB3 and mediate the recruitment of MAP3K7/TAK1 to IKBKG/NEMO, inducing subsequent activation of IKBKB/IKKB. In turn, NF-kappa-B is released from NF-kappa-B inhibitors and translocates into the nucleus where it activates the transcription of hundreds of genes involved in immune response, growth control, or protection against apoptosis. The protein kinase activity is dispensable for the NOD1 and NOD2 signaling pathways. Contributes to the tyrosine phosphorylation of the guanine exchange factor ARHGEF2 through Src tyrosine kinase leading to NF-kappa-B activation by NOD2. Also involved in adaptive immunity: plays a role during engagement of the T-cell receptor (TCR) in promoting BCL10 phosphorylation and subsequent NF-kappa-B activation. Plays a role in the inactivation of RHOA in response to NGFR signaling. This is Receptor-interacting serine/threonine-protein kinase 2 (RIPK2) from Bos taurus (Bovine).